A 430-amino-acid polypeptide reads, in one-letter code: Adenylosuccinate synthetase (430 aa).

GTP contacts are provided by residues 12-18 (GDEGKGK) and 40-42 (GHT). Residue aspartate 13 is the Proton acceptor of the active site. Mg(2+) is bound by residues aspartate 13 and glycine 40. Residues 13–16 (DEGK), 38–41 (NAGH), threonine 128, arginine 142, glutamine 223, threonine 238, and arginine 302 each bind IMP. The Proton donor role is filled by histidine 41. Residue 298–304 (TVTKRPR) participates in substrate binding. GTP contacts are provided by residues arginine 304, 330–332 (CVD), and 412–414 (SVG).

This sequence belongs to the adenylosuccinate synthetase family. In terms of assembly, homodimer. The cofactor is Mg(2+).

The protein resides in the cytoplasm. It catalyses the reaction IMP + L-aspartate + GTP = N(6)-(1,2-dicarboxyethyl)-AMP + GDP + phosphate + 2 H(+). Its pathway is purine metabolism; AMP biosynthesis via de novo pathway; AMP from IMP: step 1/2. Its function is as follows. Plays an important role in the de novo pathway of purine nucleotide biosynthesis. Catalyzes the first committed step in the biosynthesis of AMP from IMP. This is Adenylosuccinate synthetase from Ligilactobacillus salivarius (strain UCC118) (Lactobacillus salivarius).